The following is a 958-amino-acid chain: Valine--tRNA ligase (958 aa).

The 'HIGH' region motif lies at 42 to 52; the sequence is PNVTGSLHMGH. The 'KMSKS' region signature appears at 554 to 558; sequence KMSKS. Residue Lys-557 participates in ATP binding. Positions 887–956 form a coiled coil; that stretch reads LVDVAAEMAR…TEQKAEFAKL (70 aa).

Belongs to the class-I aminoacyl-tRNA synthetase family. ValS type 1 subfamily. As to quaternary structure, monomer.

The protein resides in the cytoplasm. The catalysed reaction is tRNA(Val) + L-valine + ATP = L-valyl-tRNA(Val) + AMP + diphosphate. Its function is as follows. Catalyzes the attachment of valine to tRNA(Val). As ValRS can inadvertently accommodate and process structurally similar amino acids such as threonine, to avoid such errors, it has a 'posttransfer' editing activity that hydrolyzes mischarged Thr-tRNA(Val) in a tRNA-dependent manner. This chain is Valine--tRNA ligase, found in Shewanella oneidensis (strain ATCC 700550 / JCM 31522 / CIP 106686 / LMG 19005 / NCIMB 14063 / MR-1).